The primary structure comprises 286 residues: ATP synthase gamma chain (286 aa).

Belongs to the ATPase gamma chain family. F-type ATPases have 2 components, CF(1) - the catalytic core - and CF(0) - the membrane proton channel. CF(1) has five subunits: alpha(3), beta(3), gamma(1), delta(1), epsilon(1). CF(0) has three main subunits: a, b and c.

It is found in the cell inner membrane. In terms of biological role, produces ATP from ADP in the presence of a proton gradient across the membrane. The gamma chain is believed to be important in regulating ATPase activity and the flow of protons through the CF(0) complex. This chain is ATP synthase gamma chain, found in Pseudomonas syringae pv. tomato (strain ATCC BAA-871 / DC3000).